Consider the following 935-residue polypeptide: MTLLGSEHSLLIRRKFRSVLQLRLQQRRTQEQLANQGLIPPLKGPTEFHDPRKQLDSAKTEDSLRRKGRNRSDRASLVTMHILQASTAERSIPTAQMKLKRARLADDLNEKIALRPGPLELVEKNILPMDSSVKEAIKGTEVSLSKAADAFAFEDDSSRDGLSPDQARSEDPQGSTGSTPDIKSTEAPLDTIQDLTPGSESDKNDAASQPGNQSDPGKQVLGPLSTPIPVHTAVKSKSLGDSKNRHKKPKDPKPKVKKLKYHQYIPPDQKAEKSPPPMDSAYARLLQQQQLFLQLQILSQQQQQQQQQQQQQQQQQQQQQRFSYPGMHQTHLKEPNEQMARNPNPSSTPLSNTPLSPVKNSISGQTGVSSLKPGPLPPNLDDLKVSELRQQLRIRGLPVSGTKTALVDRLRPFQDCAGNPVPNFGDITTVTFPVTPNTLPSYQSSPTGFYHFGSTSSSPPISPASSDLSAAGSLPDTFTDASPGFGLHASPVPACTDESLLSSLNGGSGPSEPDGLDSEKDKMLVEKQKVINQLTWKLRQEQRQVEELRMQLQKQKSSCSDQKPLPFLATTIKQEDVSSCPFAPQQASGKGQGHSSDSPPPACETAQLLPHCVESSGQTHVLSSTFLSPQCSPQHSPLGGLKSPQHISLPPSPNNHYFLASSSGAQRENHGVSSPSSSQGCAQMTGLQSSDKVGPTFSIPSPTFSKSSSAVSDITQPPSYEDAVKQQMTRSQQMDELLDVLIESGEMPADAREDHSCLQKIPKIPGSSCSPTAIPPKPSASFEQASSGGQMAFDHYANDSDEHLEVLLNSHSPIGKVSDVTLLKIGSEEPPFDSIMDGFPGKAAEDLFSAHELLPGPLSPMHAQLSPPSVDSSGLQLSFTESPWETMEWLDLTPPSSTPGFSNLTSSGPSIFNIDFLDVTDLNLNSPMDLHLQQW.

The short motif at 12 to 27 (IRRKFRSVLQLRLQQR) is the MEF2C-binding element. 3 RPEL repeats span residues 18–43 (SVLQ…PPLK), 62–87 (DSLR…QAST), and 106–131 (DDLN…PMDS). The disordered stretch occupies residues 37–73 (GLIPPLKGPTEFHDPRKQLDSAKTEDSLRRKGRNRSD). Over residues 46 to 73 (TEFHDPRKQLDSAKTEDSLRRKGRNRSD) the composition is skewed to basic and acidic residues. The tract at residues 153-201 (FEDDSSRDGLSPDQARSEDPQGSTGSTPDIKSTEAPLDTIQDLTPGSES) is HDAC5-binding. Residues 155–283 (DDSSRDGLSP…SPPPMDSAYA (129 aa)) form a disordered region. Polar residues-rich tracts occupy residues 172–182 (PQGSTGSTPDI) and 206–216 (AASQPGNQSDP). A compositionally biased stretch (basic residues) spans 244 to 261 (NRHKKPKDPKPKVKKLKY). Residues 287–322 (QQQQLFLQLQILSQQQQQQQQQQQQQQQQQQQQQRF) are a coiled coil. The disordered stretch occupies residues 337–378 (EQMARNPNPSSTPLSNTPLSPVKNSISGQTGVSSLKPGPLPP). Residues 342–357 (NPNPSSTPLSNTPLSP) are compositionally biased toward low complexity. Residues 358 to 369 (VKNSISGQTGVS) are compositionally biased toward polar residues. Residues 380–414 (LDDLKVSELRQQLRIRGLPVSGTKTALVDRLRPFQ) enclose the SAP domain. A phosphoserine; by GSK3-beta mark is found at Ser454, Ser458, Ser462, and Ser466. Positions 498–518 (ESLLSSLNGGSGPSEPDGLDS) are disordered. Residues 519-563 (EKDKMLVEKQKVINQLTWKLRQEQRQVEELRMQLQKQKSSCSDQK) are a coiled coil. A disordered region spans residues 579-605 (SCPFAPQQASGKGQGHSSDSPPPACET). Residues 585–597 (QQASGKGQGHSSD) are compositionally biased toward polar residues. Residues Ser624, Ser628, Ser632, and Ser636 each carry the phosphoserine; by GSK3-beta modification. A disordered region spans residues 654-731 (NNHYFLASSS…DAVKQQMTRS (78 aa)). A compositionally biased stretch (polar residues) spans 660–691 (ASSSGAQRENHGVSSPSSSQGCAQMTGLQSSD). The segment covering 695–709 (PTFSIPSPTFSKSSS) has biased composition (low complexity). The interval 714 to 935 (ITQPPSYEDA…SPMDLHLQQW (222 aa)) is required for interaction with and ubiquitination by STUB1. Ser812, Ser859, and Ser866 each carry phosphoserine; by MAPK1 and MAPK3. Thr893 is subject to Phosphothreonine; by MAPK1 and MAPK3.

In terms of assembly, homodimer. Interacts with MLLT7/FOXO4. Interacts with SRF, its association does not depend on specific DNA sequences for ternary complex formation. Interacts (via C-terminal) with EP300 (via CREB-binding domain). Interacts with HDAC4 and HDAC5. Interacts with MEF2C. Interacts (via C-terminus) with STUB1/CHIP. Interacts with PURB. Ubiquitinated; by STUB1/CHIP at the C-terminus, leading to its degradation by the proteasome. Phosphorylation by GSK3B is required for STUB1/CHIP-mediated ubiquitination. Post-translationally, phosphorylation negatively regulates transcriptional activity. Phosphorylated; by GSK3B. As to expression, expressed in smooth muscle cell-containing tissues. Expressed in the heart. Expressed in the aorta and bladder. Weakly expression in the lung, testis and kidney. Weakly expressed in the stomach. Weakly expressed in the intestine and colon. Expressed in the heart. In terms of tissue distribution, predominantly expressed in cardiac muscle. As to expression, predominantly expressed in smooth muscle cell-rich tissues.

The protein resides in the nucleus speckle. Its function is as follows. Smooth muscle cells (SM) and cardiac muscle cells-specific transcriptional factor which uses the canonical single or multiple CArG boxes DNA sequence. Acts as a cofactor of serum response factor (SRF) with the potential to modulate SRF-target genes. Plays a crucial role in cardiogenesis, urinary bladder development, and differentiation of the smooth muscle cell lineage (myogenesis). Positively regulates the transcription of genes involved in vascular smooth muscle contraction. Functionally, positively regulates the activation of smooth muscle cell gene promoter regions. Positively regulates the activation of smooth muscle cell gene promoter regions. Activation of the MYH6 promoter is enhanced in the presence of MEF2C. This is Myocardin (Myocd) from Mus musculus (Mouse).